A 58-amino-acid polypeptide reads, in one-letter code: SPbeta prophage-derived uncharacterized protein YonT (58 aa).

The helical transmembrane segment at 6–26 (GIVVAFLISLTVLTINSLTIV) threads the bilayer. A disordered region spans residues 35 to 58 (GTSKKKKRIRKRLRPKRQRQRIRR). Basic residues predominate over residues 36–58 (TSKKKKRIRKRLRPKRQRQRIRR).

Its subcellular location is the cell membrane. The protein is SPbeta prophage-derived uncharacterized protein YonT (yonT) of Bacillus subtilis (strain 168).